The primary structure comprises 370 residues: Putative agmatine deiminase (370 aa).

Cys-361 functions as the Amidino-cysteine intermediate in the catalytic mechanism.

Belongs to the agmatine deiminase family.

The catalysed reaction is agmatine + H2O = N-carbamoylputrescine + NH4(+). This chain is Putative agmatine deiminase, found in Shewanella sp. (strain MR-7).